Reading from the N-terminus, the 582-residue chain is ATP-dependent lipid A-core flippase (582 aa).

Transmembrane regions (helical) follow at residues 23-43, 61-81, 140-160, 163-183, 247-267, and 273-293; these read AAFI…TLFL, ILLY…SLNV, AVLV…LMFY, WQLS…VGVV, AIST…VLVI, and MLGE…IMLL. The 283-residue stretch at 26–308 folds into the ABC transmembrane type-1 domain; that stretch reads IAAILCMIGY…LTNVNSDFQR (283 aa). In terms of domain architecture, ABC transporter spans 340–576; it reads IVFDDVTFSY…EGAYFQLHNL (237 aa). 374 to 381 is an ATP binding site; the sequence is GRSGSGKS.

The protein belongs to the ABC transporter superfamily. Lipid exporter (TC 3.A.1.106) family. Homodimer.

The protein resides in the cell inner membrane. The enzyme catalyses ATP + H2O + lipid A-core oligosaccharideSide 1 = ADP + phosphate + lipid A-core oligosaccharideSide 2.. Functionally, involved in lipopolysaccharide (LPS) biosynthesis. Translocates lipid A-core from the inner to the outer leaflet of the inner membrane. Transmembrane domains (TMD) form a pore in the inner membrane and the ATP-binding domain (NBD) is responsible for energy generation. The sequence is that of ATP-dependent lipid A-core flippase from Idiomarina loihiensis (strain ATCC BAA-735 / DSM 15497 / L2-TR).